Here is a 517-residue protein sequence, read N- to C-terminus: Ribonuclease Y (517 aa).

A helical membrane pass occupies residues 1 to 21; it reads MIEFLIGLIAAVVGILVGYLI. The 65-residue stretch at 207-271 folds into the KH domain; that stretch reads LINVVNIKND…IAVRTVELLV (65 aa). An HD domain is found at 333–426; it reads ALIHSLEVAH…VCTADVLSAA (94 aa).

The protein belongs to the RNase Y family.

The protein resides in the cell membrane. In terms of biological role, endoribonuclease that initiates mRNA decay. This chain is Ribonuclease Y, found in Campylobacter hominis (strain ATCC BAA-381 / DSM 21671 / CCUG 45161 / LMG 19568 / NCTC 13146 / CH001A).